The sequence spans 149 residues: MTIADNKKAFFDYFIEERYEAGIVLEGWEVKAIRAGRVQIKEGYVVVRDAEMFLIGAHISPLQSASTHVKPDPVRTRKLLLKADEIKKLIGKVEQRGYTLVPLNLHYTRGRVKCEIGLAKGKKQFDKRETEKQRDWQREKARIMKGGKE.

The segment at 123–149 is disordered; the sequence is KQFDKRETEKQRDWQREKARIMKGGKE.

Belongs to the SmpB family.

It localises to the cytoplasm. In terms of biological role, required for rescue of stalled ribosomes mediated by trans-translation. Binds to transfer-messenger RNA (tmRNA), required for stable association of tmRNA with ribosomes. tmRNA and SmpB together mimic tRNA shape, replacing the anticodon stem-loop with SmpB. tmRNA is encoded by the ssrA gene; the 2 termini fold to resemble tRNA(Ala) and it encodes a 'tag peptide', a short internal open reading frame. During trans-translation Ala-aminoacylated tmRNA acts like a tRNA, entering the A-site of stalled ribosomes, displacing the stalled mRNA. The ribosome then switches to translate the ORF on the tmRNA; the nascent peptide is terminated with the 'tag peptide' encoded by the tmRNA and targeted for degradation. The ribosome is freed to recommence translation, which seems to be the essential function of trans-translation. This Cupriavidus taiwanensis (strain DSM 17343 / BCRC 17206 / CCUG 44338 / CIP 107171 / LMG 19424 / R1) (Ralstonia taiwanensis (strain LMG 19424)) protein is SsrA-binding protein.